The sequence spans 165 residues: NADH-quinone oxidoreductase subunit I (165 aa).

2 consecutive 4Fe-4S ferredoxin-type domains span residues 57–86 and 96–125; these read RRYE…IESE and TRYD…ETHI. [4Fe-4S] cluster-binding residues include Cys66, Cys69, Cys72, Cys76, Cys105, Cys108, Cys111, and Cys115.

The protein belongs to the complex I 23 kDa subunit family. In terms of assembly, NDH-1 is composed of 14 different subunits. Subunits NuoA, H, J, K, L, M, N constitute the membrane sector of the complex. It depends on [4Fe-4S] cluster as a cofactor.

It is found in the cell inner membrane. The catalysed reaction is a quinone + NADH + 5 H(+)(in) = a quinol + NAD(+) + 4 H(+)(out). Its function is as follows. NDH-1 shuttles electrons from NADH, via FMN and iron-sulfur (Fe-S) centers, to quinones in the respiratory chain. The immediate electron acceptor for the enzyme in this species is believed to be ubiquinone. Couples the redox reaction to proton translocation (for every two electrons transferred, four hydrogen ions are translocated across the cytoplasmic membrane), and thus conserves the redox energy in a proton gradient. The polypeptide is NADH-quinone oxidoreductase subunit I (Methylibium petroleiphilum (strain ATCC BAA-1232 / LMG 22953 / PM1)).